We begin with the raw amino-acid sequence, 125 residues long: Small ribosomal subunit protein uS13 (125 aa).

The disordered stretch occupies residues 95 to 125 (GLPVNGQRTRTNARTRKGGKKTVANKKKVTK). A compositionally biased stretch (basic residues) spans 105 to 125 (TNARTRKGGKKTVANKKKVTK).

It belongs to the universal ribosomal protein uS13 family. As to quaternary structure, part of the 30S ribosomal subunit. Forms a loose heterodimer with protein S19. Forms two bridges to the 50S subunit in the 70S ribosome.

Its function is as follows. Located at the top of the head of the 30S subunit, it contacts several helices of the 16S rRNA. In the 70S ribosome it contacts the 23S rRNA (bridge B1a) and protein L5 of the 50S subunit (bridge B1b), connecting the 2 subunits; these bridges are implicated in subunit movement. Contacts the tRNAs in the A and P-sites. The chain is Small ribosomal subunit protein uS13 from Leptospira interrogans serogroup Icterohaemorrhagiae serovar copenhageni (strain Fiocruz L1-130).